We begin with the raw amino-acid sequence, 441 residues long: Ribulose bisphosphate carboxylase large chain (441 aa).

At Lys-5 the chain carries N6,N6,N6-trimethyllysine. The substrate site is built by Asn-114 and Thr-164. Lys-166 functions as the Proton acceptor in the catalytic mechanism. Lys-168 lines the substrate pocket. The Mg(2+) site is built by Lys-192, Asp-194, and Glu-195. The residue at position 192 (Lys-192) is an N6-carboxylysine. Catalysis depends on His-285, which acts as the Proton acceptor. Substrate-binding residues include Arg-286, His-318, and Ser-370.

This sequence belongs to the RuBisCO large chain family. Type I subfamily. Heterohexadecamer of 8 large chains and 8 small chains; disulfide-linked. The disulfide link is formed within the large subunit homodimers. Requires Mg(2+) as cofactor. Post-translationally, the disulfide bond which can form in the large chain dimeric partners within the hexadecamer appears to be associated with oxidative stress and protein turnover.

The protein localises to the plastid. Its subcellular location is the chloroplast. It catalyses the reaction 2 (2R)-3-phosphoglycerate + 2 H(+) = D-ribulose 1,5-bisphosphate + CO2 + H2O. The enzyme catalyses D-ribulose 1,5-bisphosphate + O2 = 2-phosphoglycolate + (2R)-3-phosphoglycerate + 2 H(+). Functionally, ruBisCO catalyzes two reactions: the carboxylation of D-ribulose 1,5-bisphosphate, the primary event in carbon dioxide fixation, as well as the oxidative fragmentation of the pentose substrate in the photorespiration process. Both reactions occur simultaneously and in competition at the same active site. In Glycyrrhiza echinata (Licorice), this protein is Ribulose bisphosphate carboxylase large chain.